Here is a 353-residue protein sequence, read N- to C-terminus: Holliday junction branch migration complex subunit RuvB (353 aa).

Positions 4–190 (HYIRFKIMTN…FGIPMRLNFY (187 aa)) are large ATPase domain (RuvB-L). Residues I29, R30, G71, K74, T75, T76, 137-139 (EDF), R180, Y190, and R227 contribute to the ATP site. T75 contacts Mg(2+). Residues 191–261 (NTEELKKVLN…ISDFGLNRLE (71 aa)) are small ATPAse domain (RuvB-S). Residues 264–353 (RIGLDSNDYR…HQFNIFNEHE (90 aa)) form a head domain (RuvB-H) region. 3 residues coordinate DNA: R300, R319, and R324.

It belongs to the RuvB family. As to quaternary structure, homohexamer. Forms an RuvA(8)-RuvB(12)-Holliday junction (HJ) complex. HJ DNA is sandwiched between 2 RuvA tetramers; dsDNA enters through RuvA and exits via RuvB. An RuvB hexamer assembles on each DNA strand where it exits the tetramer. Each RuvB hexamer is contacted by two RuvA subunits (via domain III) on 2 adjacent RuvB subunits; this complex drives branch migration. In the full resolvosome a probable DNA-RuvA(4)-RuvB(12)-RuvC(2) complex forms which resolves the HJ.

It is found in the cytoplasm. The catalysed reaction is ATP + H2O = ADP + phosphate + H(+). Its function is as follows. The RuvA-RuvB-RuvC complex processes Holliday junction (HJ) DNA during genetic recombination and DNA repair, while the RuvA-RuvB complex plays an important role in the rescue of blocked DNA replication forks via replication fork reversal (RFR). RuvA specifically binds to HJ cruciform DNA, conferring on it an open structure. The RuvB hexamer acts as an ATP-dependent pump, pulling dsDNA into and through the RuvAB complex. RuvB forms 2 homohexamers on either side of HJ DNA bound by 1 or 2 RuvA tetramers; 4 subunits per hexamer contact DNA at a time. Coordinated motions by a converter formed by DNA-disengaged RuvB subunits stimulates ATP hydrolysis and nucleotide exchange. Immobilization of the converter enables RuvB to convert the ATP-contained energy into a lever motion, pulling 2 nucleotides of DNA out of the RuvA tetramer per ATP hydrolyzed, thus driving DNA branch migration. The RuvB motors rotate together with the DNA substrate, which together with the progressing nucleotide cycle form the mechanistic basis for DNA recombination by continuous HJ branch migration. Branch migration allows RuvC to scan DNA until it finds its consensus sequence, where it cleaves and resolves cruciform DNA. This is Holliday junction branch migration complex subunit RuvB from Rickettsia massiliae (strain Mtu5).